A 198-amino-acid polypeptide reads, in one-letter code: ATP synthase subunit b (198 aa).

The chain crosses the membrane as a helical span at residues 25 to 45 (PLSELLIGTLAFGLLVAFFFW).

It belongs to the ATPase B chain family. F-type ATPases have 2 components, F(1) - the catalytic core - and F(0) - the membrane proton channel. F(1) has five subunits: alpha(3), beta(3), gamma(1), delta(1), epsilon(1). F(0) has three main subunits: a(1), b(2) and c(10-14). The alpha and beta chains form an alternating ring which encloses part of the gamma chain. F(1) is attached to F(0) by a central stalk formed by the gamma and epsilon chains, while a peripheral stalk is formed by the delta and b chains.

The protein resides in the cell membrane. Functionally, f(1)F(0) ATP synthase produces ATP from ADP in the presence of a proton or sodium gradient. F-type ATPases consist of two structural domains, F(1) containing the extramembraneous catalytic core and F(0) containing the membrane proton channel, linked together by a central stalk and a peripheral stalk. During catalysis, ATP synthesis in the catalytic domain of F(1) is coupled via a rotary mechanism of the central stalk subunits to proton translocation. Component of the F(0) channel, it forms part of the peripheral stalk, linking F(1) to F(0). In Frankia alni (strain DSM 45986 / CECT 9034 / ACN14a), this protein is ATP synthase subunit b.